The following is a 1342-amino-acid chain: DNA-directed RNA polymerase subunit beta (1342 aa).

It belongs to the RNA polymerase beta chain family. The RNAP catalytic core consists of 2 alpha, 1 beta, 1 beta' and 1 omega subunit. When a sigma factor is associated with the core the holoenzyme is formed, which can initiate transcription.

It carries out the reaction RNA(n) + a ribonucleoside 5'-triphosphate = RNA(n+1) + diphosphate. In terms of biological role, DNA-dependent RNA polymerase catalyzes the transcription of DNA into RNA using the four ribonucleoside triphosphates as substrates. This Histophilus somni (strain 129Pt) (Haemophilus somnus) protein is DNA-directed RNA polymerase subunit beta.